The primary structure comprises 194 residues: ATP-dependent Clp protease proteolytic subunit (194 aa).

Catalysis depends on Ser-98, which acts as the Nucleophile. The active site involves His-123.

It belongs to the peptidase S14 family. In terms of assembly, fourteen ClpP subunits assemble into 2 heptameric rings which stack back to back to give a disk-like structure with a central cavity, resembling the structure of eukaryotic proteasomes.

It localises to the cytoplasm. The enzyme catalyses Hydrolysis of proteins to small peptides in the presence of ATP and magnesium. alpha-casein is the usual test substrate. In the absence of ATP, only oligopeptides shorter than five residues are hydrolyzed (such as succinyl-Leu-Tyr-|-NHMec, and Leu-Tyr-Leu-|-Tyr-Trp, in which cleavage of the -Tyr-|-Leu- and -Tyr-|-Trp bonds also occurs).. Functionally, cleaves peptides in various proteins in a process that requires ATP hydrolysis. Has a chymotrypsin-like activity. Plays a major role in the degradation of misfolded proteins. This Acetivibrio thermocellus (strain ATCC 27405 / DSM 1237 / JCM 9322 / NBRC 103400 / NCIMB 10682 / NRRL B-4536 / VPI 7372) (Clostridium thermocellum) protein is ATP-dependent Clp protease proteolytic subunit.